Consider the following 608-residue polypeptide: Glutamine--fructose-6-phosphate aminotransferase [isomerizing] (608 aa).

Residue Cys2 is the Nucleophile; for GATase activity of the active site. The Glutamine amidotransferase type-2 domain occupies 2 to 217 (CGIVGILGRG…DGDWAVLTRA (216 aa)). 2 SIS domains span residues 284–423 (LPFD…ERGK) and 456–598 (LARY…VDQP). Lys603 (for Fru-6P isomerization activity) is an active-site residue.

The protein localises to the cytoplasm. It catalyses the reaction D-fructose 6-phosphate + L-glutamine = D-glucosamine 6-phosphate + L-glutamate. Involved in the production of the root hair deformation (HAD) factor specifically on soybean. In Bradyrhizobium diazoefficiens (strain JCM 10833 / BCRC 13528 / IAM 13628 / NBRC 14792 / USDA 110), this protein is Glutamine--fructose-6-phosphate aminotransferase [isomerizing] (nodM).